A 204-amino-acid polypeptide reads, in one-letter code: Ribosomal RNA small subunit methyltransferase J (204 aa).

S-adenosyl-L-methionine-binding positions include 55 to 56, 71 to 72, and aspartate 123; these read RD and ER.

The protein belongs to the methyltransferase superfamily. RsmJ family.

It localises to the cytoplasm. It carries out the reaction guanosine(1516) in 16S rRNA + S-adenosyl-L-methionine = N(2)-methylguanosine(1516) in 16S rRNA + S-adenosyl-L-homocysteine + H(+). Functionally, specifically methylates the guanosine in position 1516 of 16S rRNA. This Rhodopseudomonas palustris (strain TIE-1) protein is Ribosomal RNA small subunit methyltransferase J.